We begin with the raw amino-acid sequence, 887 residues long: Pre-mRNA-splicing factor cwf22 (887 aa).

A disordered region spans residues 1 to 27 (MEKEDKSFGIGMLDYNRENPESSGHSR). Residues 124–307 (KKSINGLINK…EVLFQTRKDK (184 aa)) enclose the MIF4G domain. The segment at 366 to 401 (ILGEEDDDENEEDEEDSEETSESEEDESVNDEKPQV) is disordered. A compositionally biased stretch (acidic residues) spans 368–394 (GEEDDDENEEDEEDSEETSESEEDESV). Residues 411-527 (NLRKSIYLTI…GWEVYDCVRL (117 aa)) form the MI domain. 2 disordered regions span residues 607–834 (MPKS…KTYH) and 867–887 (GELY…PRAD). Over residues 618–662 (EGYSSGSETGSTYSSSYSSTYSRGRSYSRSTRSYSKSRSYSRSRS) the composition is skewed to low complexity. The residue at position 662 (S662) is a Phosphoserine. T664 carries the phosphothreonine modification. Residues 677–690 (KDRELSPRGRERSS) show a composition bias toward basic and acidic residues. Residues 691–712 (NRNSYSDLSRSSSLSRGRSRSY) are compositionally biased toward low complexity. Residues 717–726 (RLIESEDKGY) are compositionally biased toward basic and acidic residues. Residues 736 to 746 (RKYRSRQRYRR) show a composition bias toward basic residues. Low complexity-rich tracts occupy residues 747–762 (SYAG…SRSP) and 769–791 (SMSC…SRSP). A compositionally biased stretch (polar residues) spans 799–809 (DSLSYNRQYSP).

This sequence belongs to the CWC22 family. As to quaternary structure, belongs to the 40S cdc5-associated complex (or cwf complex), a spliceosome sub-complex reminiscent of a late-stage spliceosome composed of the U2, U5 and U6 snRNAs and at least brr2, cdc5, cwf2/prp3, cwf3/syf1, cwf4/syf3, cwf5/ecm2, spp42/cwf6, cwf7/spf27, cwf8, cwf9, cwf10, cwf11, cwf12, prp45/cwf13, cwf14, cwf15, cwf16, cwf17, cwf18, cwf19, cwf20, cwf21, cwf22, cwf23, cwf24, cwf25, cwf26, cyp7/cwf27, cwf28, cwf29/ist3, lea1, msl1, prp5/cwf1, prp10, prp12/sap130, prp17, prp22, sap61, sap62, sap114, sap145, slu7, smb1, smd1, smd3, smf1, smg1 and syf2.

It localises to the cytoplasm. The protein localises to the nucleus. Functionally, may be involved in pre-mRNA splicing. This is Pre-mRNA-splicing factor cwf22 (cwf22) from Schizosaccharomyces pombe (strain 972 / ATCC 24843) (Fission yeast).